The following is a 417-amino-acid chain: Gamma-glutamyl phosphate reductase (417 aa).

This sequence belongs to the gamma-glutamyl phosphate reductase family.

The protein resides in the cytoplasm. The enzyme catalyses L-glutamate 5-semialdehyde + phosphate + NADP(+) = L-glutamyl 5-phosphate + NADPH + H(+). The protein operates within amino-acid biosynthesis; L-proline biosynthesis; L-glutamate 5-semialdehyde from L-glutamate: step 2/2. Functionally, catalyzes the NADPH-dependent reduction of L-glutamate 5-phosphate into L-glutamate 5-semialdehyde and phosphate. The product spontaneously undergoes cyclization to form 1-pyrroline-5-carboxylate. This is Gamma-glutamyl phosphate reductase from Escherichia coli O6:H1 (strain CFT073 / ATCC 700928 / UPEC).